The chain runs to 70 residues: Small ribosomal subunit protein eS17 (70 aa).

It belongs to the eukaryotic ribosomal protein eS17 family.

The sequence is that of Small ribosomal subunit protein eS17 from Methanopyrus kandleri (strain AV19 / DSM 6324 / JCM 9639 / NBRC 100938).